The sequence spans 437 residues: Cytochrome b (437 aa).

Residues 45–65 (WIWGIVLAFTLVLQIVTGIVL) traverse the membrane as a helical segment. The heme b site is built by H97 and H111. 9 consecutive transmembrane segments (helical) span residues 100 to 120 (GASL…YYGS), 129 to 149 (WIVG…GYVL), 156 to 176 (FWGA…GPSI), 194 to 214 (FFSL…IHIW), 248 to 268 (FVIK…AVVA), 298 to 318 (FLPF…VILV), 330 to 350 (FFGV…PWLD), 365 to 385 (MWFW…AMPT), and 391 to 411 (WISL…LPLL). Heme b-binding residues include H198 and H212.

The protein belongs to the cytochrome b family. As to quaternary structure, the main subunits of complex b-c1 are: cytochrome b, cytochrome c1 and the Rieske protein. The cofactor is heme b.

It localises to the cell membrane. Functionally, component of the ubiquinol-cytochrome c reductase complex (complex III or cytochrome b-c1 complex), which is a respiratory chain that generates an electrochemical potential coupled to ATP synthesis. In Rhodobacter capsulatus (strain ATCC BAA-309 / NBRC 16581 / SB1003), this protein is Cytochrome b (petB).